Reading from the N-terminus, the 957-residue chain is SH3 domain-binding protein 4 (957 aa).

The SH3 1 domain occupies 54–113; it reads DNVKEVVAIKDYCPNNFTTLKFSKGEHLYVLDTSGGEWWYAHNTTEMGYIPSSYVQPLNY. The 138-residue stretch at 312 to 449 folds into the ZU5 domain; that stretch reads TSIVCRLDSS…LEPVMYVVMV (138 aa). The SH3 2 domain maps to 649 to 719; that stretch reads TSLKYGKLLK…HAKNVLVVGK (71 aa).

Homodimer or homooligomer.

Its subcellular location is the membrane. The protein resides in the clathrin-coated pit. It localises to the cytoplasmic vesicle. The protein localises to the clathrin-coated vesicle. It is found in the nucleus. Functionally, possible role in regulating endocytosis of the transferrin receptor at the plasma membrane. Alternatively, may function as a negative regulator of the amino acid-induced TOR signaling by inhibiting the formation of active Rag GTPase complexes. Preferentially binds inactive Rag GTPase complexes and prevents their interaction with the mTORC1 complex inhibiting its relocalization to lysosomes and its activation. Thereby, may indirectly regulate cell growth, proliferation and autophagy. This is SH3 domain-binding protein 4 (sh3bp4) from Xenopus tropicalis (Western clawed frog).